The sequence spans 652 residues: Acetyl-coenzyme A synthetase (652 aa).

CoA contacts are provided by residues 189–192 (RGGK) and T311. Residues 387–389 (GEP), 411–416 (DTWWQT), D500, and R515 each bind ATP. S523 is a CoA binding site. R526 provides a ligand contact to ATP. Residues V537, H539, and V542 each coordinate Mg(2+). Residue R584 coordinates CoA. Residue K609 is modified to N6-acetyllysine.

The protein belongs to the ATP-dependent AMP-binding enzyme family. Mg(2+) serves as cofactor. In terms of processing, acetylated. Deacetylation by the SIR2-homolog deacetylase activates the enzyme.

It catalyses the reaction acetate + ATP + CoA = acetyl-CoA + AMP + diphosphate. Its function is as follows. Catalyzes the conversion of acetate into acetyl-CoA (AcCoA), an essential intermediate at the junction of anabolic and catabolic pathways. AcsA undergoes a two-step reaction. In the first half reaction, AcsA combines acetate with ATP to form acetyl-adenylate (AcAMP) intermediate. In the second half reaction, it can then transfer the acetyl group from AcAMP to the sulfhydryl group of CoA, forming the product AcCoA. This chain is Acetyl-coenzyme A synthetase, found in Bartonella henselae (strain ATCC 49882 / DSM 28221 / CCUG 30454 / Houston 1) (Rochalimaea henselae).